A 218-amino-acid chain; its full sequence is Orotate phosphoribosyltransferase (218 aa).

5-phospho-alpha-D-ribose 1-diphosphate is bound at residue K26. 34-35 (FF) is a binding site for orotate. 5-phospho-alpha-D-ribose 1-diphosphate is bound by residues 72-73 (YK), R99, K100, K103, H105, and 124-132 (DDVITAGTA). Residues T128 and R156 each contribute to the orotate site.

This sequence belongs to the purine/pyrimidine phosphoribosyltransferase family. PyrE subfamily. As to quaternary structure, homodimer. Requires Mg(2+) as cofactor.

The catalysed reaction is orotidine 5'-phosphate + diphosphate = orotate + 5-phospho-alpha-D-ribose 1-diphosphate. The protein operates within pyrimidine metabolism; UMP biosynthesis via de novo pathway; UMP from orotate: step 1/2. In terms of biological role, catalyzes the transfer of a ribosyl phosphate group from 5-phosphoribose 1-diphosphate to orotate, leading to the formation of orotidine monophosphate (OMP). In Hamiltonella defensa subsp. Acyrthosiphon pisum (strain 5AT), this protein is Orotate phosphoribosyltransferase.